Consider the following 41-residue polypeptide: Virescein (41 aa).

Residue His41 is modified to Histidine amide.

As to quaternary structure, monomer. Hemolymph.

It localises to the secreted. In terms of biological role, has antibacterial activity against Gram-positive and Gram-negative bacteria. The sequence is that of Virescein from Heliothis virescens (Tobacco budworm moth).